The primary structure comprises 671 residues: Gametogenetin-binding protein 2-like (671 aa).

2 disordered regions span residues 372–489 (REQK…ARVQ) and 532–562 (VRDS…SEVS). Positions 373 to 384 (EQKKLKKKKKKD) are enriched in basic residues. The span at 385-395 (EKKNLLHRQCD) shows a compositional bias: basic and acidic residues. A compositionally biased stretch (acidic residues) spans 396–420 (DTEANESDEEEEELRNEELDLEEES). Positions 455-472 (TKSKPKKQSKKKKQKKAA) are enriched in basic residues. Composition is skewed to polar residues over residues 476-486 (MGNQKQMQATA) and 546-557 (GSRTSSAISSPE).

The sequence is that of Gametogenetin-binding protein 2-like from Drosophila melanogaster (Fruit fly).